Consider the following 333-residue polypeptide: tRNA dimethylallyltransferase (333 aa).

23–30 (GPTGAGKT) lines the ATP pocket. 25–30 (TGAGKT) serves as a coordination point for substrate. Interaction with substrate tRNA regions lie at residues 53–56 (DSAL) and 177–181 (QRVQR).

This sequence belongs to the IPP transferase family. Monomer. Mg(2+) serves as cofactor.

It catalyses the reaction adenosine(37) in tRNA + dimethylallyl diphosphate = N(6)-dimethylallyladenosine(37) in tRNA + diphosphate. Its function is as follows. Catalyzes the transfer of a dimethylallyl group onto the adenine at position 37 in tRNAs that read codons beginning with uridine, leading to the formation of N6-(dimethylallyl)adenosine (i(6)A). In Polynucleobacter asymbioticus (strain DSM 18221 / CIP 109841 / QLW-P1DMWA-1) (Polynucleobacter necessarius subsp. asymbioticus), this protein is tRNA dimethylallyltransferase.